A 104-amino-acid polypeptide reads, in one-letter code: N(4)-acetylcytidine amidohydrolase (104 aa).

The region spanning 7–95 (MTFFERFETD…IQDIYPGISQ (89 aa)) is the ASCH domain. Lysine 22 acts as the Proton acceptor in catalysis. The active-site Nucleophile is threonine 25. The active-site Proton donor is the glutamate 75.

The protein belongs to the N(4)-acetylcytidine amidohydrolase family.

The enzyme catalyses N(4)-acetylcytidine + H2O = cytidine + acetate + H(+). The catalysed reaction is N(4)-acetyl-2'-deoxycytidine + H2O = 2'-deoxycytidine + acetate + H(+). It catalyses the reaction N(4)-acetylcytosine + H2O = cytosine + acetate + H(+). Functionally, catalyzes the hydrolysis of N(4)-acetylcytidine (ac4C). This is N(4)-acetylcytidine amidohydrolase from Vibrio atlanticus (strain LGP32) (Vibrio splendidus (strain Mel32)).